We begin with the raw amino-acid sequence, 511 residues long: 2,3-bisphosphoglycerate-independent phosphoglycerate mutase (511 aa).

Mn(2+)-binding residues include Asp18 and Ser68. The active-site Phosphoserine intermediate is the Ser68. Residues His129, 159-160 (RD), Arg191, Lys197, 261-264 (RSDR), and Lys329 each bind substrate. Mn(2+) contacts are provided by Asp396, His400, Asp437, His438, and His459. The tract at residues 442–464 (ERMTKQAPDGSVRPYGGHTTNPV) is disordered.

It belongs to the BPG-independent phosphoglycerate mutase family. In terms of assembly, monomer. It depends on Mn(2+) as a cofactor.

The enzyme catalyses (2R)-2-phosphoglycerate = (2R)-3-phosphoglycerate. The protein operates within carbohydrate degradation; glycolysis; pyruvate from D-glyceraldehyde 3-phosphate: step 3/5. Its function is as follows. Catalyzes the interconversion of 2-phosphoglycerate and 3-phosphoglycerate. The sequence is that of 2,3-bisphosphoglycerate-independent phosphoglycerate mutase from Streptomyces coelicolor (strain ATCC BAA-471 / A3(2) / M145).